Reading from the N-terminus, the 156-residue chain is Endoribonuclease YbeY (156 aa).

Residues H117, H121, and H127 each coordinate Zn(2+).

It belongs to the endoribonuclease YbeY family. Zn(2+) serves as cofactor.

It is found in the cytoplasm. Functionally, single strand-specific metallo-endoribonuclease involved in late-stage 70S ribosome quality control and in maturation of the 3' terminus of the 16S rRNA. The sequence is that of Endoribonuclease YbeY from Shewanella frigidimarina (strain NCIMB 400).